Here is a 271-residue protein sequence, read N- to C-terminus: WUSCHEL-related homeobox 6 (271 aa).

Residues Ala-57–Arg-121 constitute a DNA-binding region (homeobox; WUS-type). Residues Arg-118–Glu-195 form a disordered region. Composition is skewed to basic and acidic residues over residues Pro-132–Gln-148 and Asn-180–Glu-195.

Belongs to the WUS homeobox family. As to expression, highly expressed in developing ovules. Present in developing primordia and differentiating organs but absent in mature organs.

It localises to the nucleus. Functionally, transcription factor that plays a central role in ovule patterning by regulating cell proliferation of the maternal integuments and differentiation of the maegaspore mother cell (MCC). Involved in AGAMOUS (AG) repression in leaves. This chain is WUSCHEL-related homeobox 6 (WOX6), found in Arabidopsis thaliana (Mouse-ear cress).